The chain runs to 1663 residues: Cortactin-binding protein 2 (1663 aa).

5 disordered regions span residues 1-23, 203-222, 359-440, 454-478, and 498-617; these read MATDGASCEPDLSRAPEDAAGAA, KKKTNELEEELSTEKRRSTE, QASH…LHPG, GNANDPDQNGNTTQSPPSRDVSPTS, and RFTS…KPSI. Residues 119 to 276 are a coiled coil; it reads KKMQERMSAQ…EQLKRGSDSK (158 aa). The segment covering 386-396 has biased composition (low complexity); it reads PSTGSTPDPTS. Arg-498 is modified (asymmetric dimethylarginine). Residues 583-593 are compositionally biased toward polar residues; sequence TVASPPSSLPQ. ANK repeat units lie at residues 709 to 739, 743 to 772, 776 to 805, 809 to 838, 842 to 871, and 912 to 942; these read GRPTLLQQAAAQGNVTLLSMLLNEEGLDINY, DGHSALYSAAKNGHTDCVRLLLSAEAQVNA, NGFTPLCAAAAQGHFECVELLIAYDANINH, GGQTPLYLACKNGNKECVKLLLEAGTNRSV, DGWTPVHAAVDTGNVDSLKLLMYHRIPARG, and EGWTAAHIAASKGFKNCLEILCRHRGLEPER. The disordered stretch occupies residues 1446–1485; sequence NKKKGESGAWRKVNTSPRRKSGRFSLPTWNKPDLSTEGMK. Phosphoserine is present on Ser-1524. Residues 1580 to 1663 are disordered; the sequence is SQKEVSPLSS…KNEHLEKPNK (84 aa). The segment covering 1582 to 1599 has biased composition (polar residues); the sequence is KEVSPLSSHQTTECSNSK. The span at 1624–1638 shows a compositional bias: low complexity; the sequence is SQNTKRSSSSSNTRQ. Residues 1645–1663 show a composition bias toward basic and acidic residues; that stretch reads SKEENWNLHKNEHLEKPNK.

Interacts with CTTN/cortactin SH3 domain. Interacts with STRN, STRN4/zinedin and MOB4/phocein; this interactions mediate the association with the STRIPAK core complex and may regulate dendritic spine distribution of the STRIPAK complex in hippocampal neurons. Activation of glutamate receptors weakens the interaction with STRN and STRN4.

The protein localises to the cytoplasm. It localises to the cell cortex. Its subcellular location is the cell projection. The protein resides in the dendritic spine. Its function is as follows. Regulates the dendritic spine distribution of CTTN/cortactin in hippocampal neurons, and thus controls dendritic spinogenesis and dendritic spine maintenance. Associates with the striatin-interacting phosphatase and kinase (STRIPAK) core complex to regulate dendritic spine distribution of the STRIPAK complex in hippocampal neurons. This chain is Cortactin-binding protein 2 (CTTNBP2), found in Pongo abelii (Sumatran orangutan).